Consider the following 901-residue polypeptide: Protein SOK1 (901 aa).

Disordered stretches follow at residues 1–87, 106–139, and 162–231; these read MDQP…QNII, RSSGVITPSMSLNASTNATNNDSSGNSANSSDLK, and NDDN…NASN. Positions 10 to 51 are enriched in low complexity; that stretch reads PTTASNPAPSSTNSSSAPSATNSKQERSSSSLSKPSSVVPSK. 2 positions are modified to phosphoserine: Ser-40 and Ser-53. Polar residues-rich tracts occupy residues 74-87 and 106-115; these read GDTSTLDGSSQNII and RSSGVITPSM. A compositionally biased stretch (low complexity) spans 116 to 138; it reads SLNASTNATNNDSSGNSANSSDL. Ser-191 and Ser-193 each carry phosphoserine. Residues 220–231 show a composition bias toward polar residues; sequence AAQQQPPGNASN. Ser-245 is subject to Phosphoserine.

This sequence belongs to the TCP11 family.

It localises to the nucleus. In terms of biological role, high copy suppressor of a cyclic AMP-dependent protein kinase mutant. In Saccharomyces cerevisiae (strain ATCC 204508 / S288c) (Baker's yeast), this protein is Protein SOK1 (SOK1).